A 975-amino-acid polypeptide reads, in one-letter code: Exocyst complex component 4 (975 aa).

At A2 the chain carries N-acetylalanine. K9 carries the post-translational modification N6-acetyllysine. The residue at position 32 (S32) is a Phosphoserine. Residues S32–L114 are a coiled coil. The span at R211 to D224 shows a compositional bias: basic and acidic residues. Residues R211–L230 are disordered. S226 carries the post-translational modification Phosphoserine. Residue T238 is modified to Phosphothreonine. S469 is modified (phosphoserine).

This sequence belongs to the SEC8 family. In terms of assembly, the exocyst complex is composed of EXOC1, EXOC2, EXOC3, EXOC4, EXOC5, EXOC6, EXOC7 and EXOC8. Interacts with BIRC6/bruce. Interacts with MYRIP. Interacts with SH3BP1; required for the localization of both SH3BP1 and the exocyst to the leading edge of migrating cells. Interacts with SLC6A9. In terms of tissue distribution, expressed in the striatum (at protein level).

The protein resides in the midbody. It localises to the midbody ring. The protein localises to the cell projection. Its subcellular location is the cytoplasm. It is found in the cytoskeleton. The protein resides in the microtubule organizing center. It localises to the centrosome. Its function is as follows. Component of the exocyst complex involved in the docking of exocytic vesicles with fusion sites on the plasma membrane. The chain is Exocyst complex component 4 (Exoc4) from Mus musculus (Mouse).